A 431-amino-acid polypeptide reads, in one-letter code: Serine--tRNA ligase (431 aa).

Residues 41 to 66 (QSRTQELQAERNARSKSIGEAARRGE) are disordered. 240-242 (TSE) contacts L-serine. 271–273 (RSE) is an ATP binding site. Residue E294 coordinates L-serine. 358–361 (EISS) contributes to the ATP binding site. S392 contributes to the L-serine binding site.

Belongs to the class-II aminoacyl-tRNA synthetase family. Type-1 seryl-tRNA synthetase subfamily. Homodimer. The tRNA molecule binds across the dimer.

It is found in the cytoplasm. It catalyses the reaction tRNA(Ser) + L-serine + ATP = L-seryl-tRNA(Ser) + AMP + diphosphate + H(+). The enzyme catalyses tRNA(Sec) + L-serine + ATP = L-seryl-tRNA(Sec) + AMP + diphosphate + H(+). Its pathway is aminoacyl-tRNA biosynthesis; selenocysteinyl-tRNA(Sec) biosynthesis; L-seryl-tRNA(Sec) from L-serine and tRNA(Sec): step 1/1. In terms of biological role, catalyzes the attachment of serine to tRNA(Ser). Is also able to aminoacylate tRNA(Sec) with serine, to form the misacylated tRNA L-seryl-tRNA(Sec), which will be further converted into selenocysteinyl-tRNA(Sec). This Aeromonas hydrophila subsp. hydrophila (strain ATCC 7966 / DSM 30187 / BCRC 13018 / CCUG 14551 / JCM 1027 / KCTC 2358 / NCIMB 9240 / NCTC 8049) protein is Serine--tRNA ligase.